Reading from the N-terminus, the 208-residue chain is MTKLLYITAHPLDELGSNSMAAGKTFVDSYKENHPSDEVKHIDLFNEDIPMIDKDVLTGWGKLRNGDELTSEEQQKVNRLSEILDEFLEADKYVFVSPMWNLSFPPVLKAYIDAISIAGKTFKYTAEGPQGLLTDKKVLHIQSRGGYYTEGPAAEVESGDRYLRNIMTFLGVPSYETIIIEGHNAEPEKTEEIKAASIAEAKELAKTF.

Residues 17-19 (SNS), 99-102 (MWNL), and 143-146 (SRGG) each bind FMN.

The protein belongs to the azoreductase type 1 family. In terms of assembly, homodimer. FMN serves as cofactor.

The catalysed reaction is 2 a quinone + NADH + H(+) = 2 a 1,4-benzosemiquinone + NAD(+). It carries out the reaction N,N-dimethyl-1,4-phenylenediamine + anthranilate + 2 NAD(+) = 2-(4-dimethylaminophenyl)diazenylbenzoate + 2 NADH + 2 H(+). Functionally, quinone reductase that provides resistance to thiol-specific stress caused by electrophilic quinones. In terms of biological role, also exhibits azoreductase activity. Catalyzes the reductive cleavage of the azo bond in aromatic azo compounds to the corresponding amines. In Staphylococcus haemolyticus (strain JCSC1435), this protein is FMN-dependent NADH:quinone oxidoreductase.